The chain runs to 413 residues: Tryptophan synthase beta chain 2 (413 aa).

Residue Lys-107 is modified to N6-(pyridoxal phosphate)lysine.

It belongs to the TrpB family. As to quaternary structure, tetramer of two alpha and two beta chains. Pyridoxal 5'-phosphate serves as cofactor.

The catalysed reaction is (1S,2R)-1-C-(indol-3-yl)glycerol 3-phosphate + L-serine = D-glyceraldehyde 3-phosphate + L-tryptophan + H2O. The protein operates within amino-acid biosynthesis; L-tryptophan biosynthesis; L-tryptophan from chorismate: step 5/5. Functionally, the beta subunit is responsible for the synthesis of L-tryptophan from indole and L-serine. This Nostoc sp. (strain PCC 7120 / SAG 25.82 / UTEX 2576) protein is Tryptophan synthase beta chain 2 (trpB2).